The primary structure comprises 1029 residues: Beta-galactosidase (1029 aa).

2 residues coordinate substrate: Asn-108 and Asp-207. Position 207 (Asp-207) interacts with Na(+). Mg(2+) is bound by residues Glu-422, His-424, and Glu-467. Residues Glu-467 and 543-546 (EYAH) contribute to the substrate site. Glu-467 (proton donor) is an active-site residue. Glu-543 functions as the Nucleophile in the catalytic mechanism. A Mg(2+)-binding site is contributed by Asn-603. Na(+) is bound by residues Phe-607 and Asn-610. 2 residues coordinate substrate: Asn-610 and Trp-1005.

This sequence belongs to the glycosyl hydrolase 2 family. As to quaternary structure, homotetramer. Requires Mg(2+) as cofactor. The cofactor is Na(+).

The catalysed reaction is Hydrolysis of terminal non-reducing beta-D-galactose residues in beta-D-galactosides.. The polypeptide is Beta-galactosidase (Escherichia coli).